We begin with the raw amino-acid sequence, 250 residues long: Ubiquinone/menaquinone biosynthesis C-methyltransferase UbiE (250 aa).

S-adenosyl-L-methionine is bound by residues serine 73, aspartate 94, and asparagine 122–alanine 123.

The protein belongs to the class I-like SAM-binding methyltransferase superfamily. MenG/UbiE family.

The catalysed reaction is a 2-demethylmenaquinol + S-adenosyl-L-methionine = a menaquinol + S-adenosyl-L-homocysteine + H(+). The enzyme catalyses a 2-methoxy-6-(all-trans-polyprenyl)benzene-1,4-diol + S-adenosyl-L-methionine = a 5-methoxy-2-methyl-3-(all-trans-polyprenyl)benzene-1,4-diol + S-adenosyl-L-homocysteine + H(+). It functions in the pathway quinol/quinone metabolism; menaquinone biosynthesis; menaquinol from 1,4-dihydroxy-2-naphthoate: step 2/2. It participates in cofactor biosynthesis; ubiquinone biosynthesis. Its function is as follows. Methyltransferase required for the conversion of demethylmenaquinol (DMKH2) to menaquinol (MKH2) and the conversion of 2-polyprenyl-6-methoxy-1,4-benzoquinol (DDMQH2) to 2-polyprenyl-3-methyl-6-methoxy-1,4-benzoquinol (DMQH2). In Legionella pneumophila (strain Lens), this protein is Ubiquinone/menaquinone biosynthesis C-methyltransferase UbiE.